Consider the following 374-residue polypeptide: Serine/threonine-protein kinase-transforming protein mos (374 aa).

The Protein kinase domain maps to 94–370 (VCLMHRLGSG…LLQRDLKAFR (277 aa)). ATP contacts are provided by residues 100 to 108 (LGSGGFGSV) and Lys-121. Asp-229 (proton acceptor) is an active-site residue.

The protein belongs to the protein kinase superfamily. Ser/Thr protein kinase family.

The enzyme catalyses L-seryl-[protein] + ATP = O-phospho-L-seryl-[protein] + ADP + H(+). The catalysed reaction is L-threonyl-[protein] + ATP = O-phospho-L-threonyl-[protein] + ADP + H(+). This Mus musculus (Mouse) protein is Serine/threonine-protein kinase-transforming protein mos (V-MOS).